The primary structure comprises 558 residues: Potassium-transporting ATPase potassium-binding subunit (558 aa).

A run of 12 helical transmembrane segments spans residues 1–21 (MEIILFLTMMVMIAYVFSGYL), 66–86 (FNGFMGLITFVLLIVQQWLFL), 127–147 (MIVMTYLMFTSSASGYAVCIA), 166–186 (IVRFIVRVLLPLSCLISILLM), 245–265 (IWSDFIEMGSMMLLPMSMLFL), 281–301 (ALILFVAMFFIFIAILTLTMW), 327–347 (FGAGLSALFTVITTAFTTGSV), 354–374 (LTPLGGLGPMVLMMLNVVFGG), 377–397 (VGLMNLLIYVLLTVFICSLMV), 416–436 (IVLVFLIHPILILVFSALAFM), 482–502 (ISTGIIMLLSRYIPIILQLLI), and 531–551 (IVFIVLLSGLTFIPVLLLGPI).

This sequence belongs to the KdpA family. The system is composed of three essential subunits: KdpA, KdpB and KdpC.

The protein localises to the cell membrane. In terms of biological role, part of the high-affinity ATP-driven potassium transport (or Kdp) system, which catalyzes the hydrolysis of ATP coupled with the electrogenic transport of potassium into the cytoplasm. This subunit binds the extracellular potassium ions and delivers the ions to the membrane domain of KdpB through an intramembrane tunnel. The chain is Potassium-transporting ATPase potassium-binding subunit from Staphylococcus aureus (strain bovine RF122 / ET3-1).